We begin with the raw amino-acid sequence, 624 residues long: 1-deoxy-D-xylulose-5-phosphate synthase (624 aa).

Thiamine diphosphate contacts are provided by residues His74 and Gly115–Ser117. Asp146 contacts Mg(2+). Residues Gly147–Ala148, Asn175, Tyr286, and Glu366 each bind thiamine diphosphate. A Mg(2+)-binding site is contributed by Asn175.

It belongs to the transketolase family. DXPS subfamily. In terms of assembly, homodimer. Mg(2+) is required as a cofactor. The cofactor is thiamine diphosphate.

It catalyses the reaction D-glyceraldehyde 3-phosphate + pyruvate + H(+) = 1-deoxy-D-xylulose 5-phosphate + CO2. It participates in metabolic intermediate biosynthesis; 1-deoxy-D-xylulose 5-phosphate biosynthesis; 1-deoxy-D-xylulose 5-phosphate from D-glyceraldehyde 3-phosphate and pyruvate: step 1/1. Its function is as follows. Catalyzes the acyloin condensation reaction between C atoms 2 and 3 of pyruvate and glyceraldehyde 3-phosphate to yield 1-deoxy-D-xylulose-5-phosphate (DXP). The protein is 1-deoxy-D-xylulose-5-phosphate synthase of Clostridium kluyveri (strain NBRC 12016).